The sequence spans 926 residues: MKKTTALFLLIFSLIACQSLELSPNNNLPFDPNIQHGKLSNGLQYFVLKNTEPKERVYIRLVINAGSMHEDDDQKGIAHLVEHMAFNGSKKYPENQIINALEKLGMKFARDINAFTDFENTVYTLNLDSNNQQKLELAFDVINEWMNNITFLPKDVDGERGVVQEEWRRRLSPMLRIGNKKSAIEMAGSRYVLRDPIGDMDIIKTISAKRVADFYHKWYRPDNMSVIIVGDIDTKQVVKLLKQNLSQENPITKTTLEKIDFNIPLINKWRLDSISEQGTTIPSIELSFFENTIETNTLASYKQELIQQITTRLLNLRLQQWEKETENGVDSANFYRTHLGKETLQSIFSLQLIDTQYSKTIDKLFAFIASIKQQGFTQNELSGEIKRLTQLNEKQLNIRSGSLKIADDLITSVANKQVVLSVNDRYELNKRFLSQITLADLQRTLNQTLALKAKLLLITQPLPQKALPFDVAEIETRWNNVMEMQQHQWDEKKQIEKLPHLTFNTGSLSQEKYWDRGDIYEFRLSNGSKLIYHYSDKTPNQVHFRAVTQGGLRSIPNKDYHLLRAAVSVVDETGVGELSLSAVNQIFSRDPLVIATVIDDDKQGFTGVSKPKDLENLLTLFRLKLRSSPISDLALEKYRRETRDYFKQIDLETQFMQAVSKLRFPNIETVYTQKQAQQLSFDKNQLNNAYQHYILDKTDFTYFIIGDIELNQVKKLAERYLASIESKTQIRHFVPTIIHTPTQSFIMNGLKEPRADVEIYLTADNTWRTEQKYLFNILADIVQEKLRLILREKVSGIYSVNSWFMQDVYAPQIEGKIEFSCDPKRVEELTYLTNQVLDDIIKNGIDENLLRKKLAEQHTQIRREFDSLVSIASIIEESYWQQDNPDAIYTYQHLDQLATKATIDALAQKALKKSGRFVSILKAASY.

Residue His79 coordinates Zn(2+). Glu82 serves as the catalytic Proton acceptor. Residues His83 and Glu159 each contribute to the Zn(2+) site.

It belongs to the peptidase M16 family. Zn(2+) is required as a cofactor.

The polypeptide is Probable zinc protease PqqL (pqqL) (Haemophilus influenzae (strain ATCC 51907 / DSM 11121 / KW20 / Rd)).